The sequence spans 137 residues: Altered inheritance of mitochondria protein 11 (137 aa).

The next 2 helical transmembrane spans lie at 20 to 37 (YGAA…SRAI) and 66 to 88 (LTYA…CWAL).

The protein belongs to the AIM11 family.

It localises to the membrane. The sequence is that of Altered inheritance of mitochondria protein 11 (AIM11) from Saccharomyces cerevisiae (strain RM11-1a) (Baker's yeast).